Here is a 70-residue protein sequence, read N- to C-terminus: Kappa-scoloptoxin(07)-Ssm2b (70 aa).

Positions 1–19 are cleaved as a signal peptide; it reads MLVFYALLFVSVFSSTVMG. The propeptide occupies 20 to 39; that stretch reads ATIDKPILREAIEEIDVNKR.

Belongs to the scoloptoxin-07 family. Post-translationally, contains 3 disulfide bonds. Expressed by the venom gland.

It localises to the secreted. In terms of biological role, inhibits voltage-gated potassium channels. This Scolopendra mutilans (Chinese red-headed centipede) protein is Kappa-scoloptoxin(07)-Ssm2b.